A 157-amino-acid chain; its full sequence is Small ribosomal subunit protein uS7cz/uS7cy (157 aa).

Belongs to the universal ribosomal protein uS7 family. Part of the 30S ribosomal subunit.

It localises to the plastid. The protein localises to the chloroplast. One of the primary rRNA binding proteins, it binds directly to 16S rRNA where it nucleates assembly of the head domain of the 30S subunit. The polypeptide is Small ribosomal subunit protein uS7cz/uS7cy (rps7-A) (Welwitschia mirabilis (Tree tumbo)).